We begin with the raw amino-acid sequence, 924 residues long: DNA repair and recombination protein RDH54 (924 aa).

Basic and acidic residues predominate over residues M1 to P10. Disordered stretches follow at residues M1–K21 and E155–G182. A compositionally biased stretch (low complexity) spans T168–T178. The Helicase ATP-binding domain maps to L299–G487. An ATP-binding site is contributed by I346–K353. A DEGH box motif is present at residues N472–N475. K615 is covalently cross-linked (Glycyl lysine isopeptide (Lys-Gly) (interchain with G-Cter in ubiquitin)). A Helicase C-terminal domain is found at K631 to S790.

The protein belongs to the SNF2/RAD54 helicase family. In terms of assembly, interacts with RAD51 and DMC1.

It is found in the nucleus. It carries out the reaction ATP + H2O = ADP + phosphate + H(+). Functionally, involved in the recombinational repair of double-strand breaks (DSB) in DNA during mitosis and meiosis. Has DNA dependent ATPase activity. Promotes D-loop (displacement loop) formation with RAD51 recombinase. Modifies the topology of double-stranded DNA during the D-loop reaction to facilitate the invasion of the homologous duplex molecule by the initiating single-stranded DNA substrate. Required for adaptation from G2/M checkpoint arrest induced by a double strand break, by participating in monitoring the extent of single-stranded DNA produced by resection of DNA ends. This role is distinct from its roles in recombination. Promotes colocalization of RAD51 and DMC1 during meiotic recombination. Involved in crossover interference. This is DNA repair and recombination protein RDH54 (RDH54) from Saccharomyces cerevisiae (strain AWRI1631) (Baker's yeast).